The sequence spans 71 residues: Calcium dodecin (71 aa).

Position 18 (Glu-18) interacts with Ca(2+).

Belongs to the dodecin family. Homododecamer; 12 subunits assemble to form a hollow sphere with a diameter of about 75 Angstroms. Calcium ions are bound at the interface between three subunits.

Its function is as follows. Binds calcium ions. May play a role in sequestering additional small ligands. The sequence is that of Calcium dodecin (secE2) from Mycobacterium tuberculosis (strain ATCC 25618 / H37Rv).